A 527-amino-acid polypeptide reads, in one-letter code: MRFLRFLKIFFTVIRFGLDEMMLSRVNDRRVRLLLRITTIGRKFDQPPGVRLRLALESLGPIFVKFGQVLSTRRDLLRPDIATELAKLQDQVPPFDSAVAIAIIEKSLGAPVDTIFDDFERVPVASASIAQVHFATLKIGQHAGKQVAVKVLRPNMLPVIDSDLALLRDIAVWAERLWADGKRLKPREVVAEFDKYLHDELDLMREAANGSQLRRNFAGLDLLLVPEMYWEYCTANVLVMERMVGVPISQVDTLRVAGVDIPKLAREGVEIFFTQVFRDGFFHADMHPGNIQVSLDPAHFGRYIALDFGIIGALSDFDKNYLAQNFLAFFKRDYHRVATLHLESGWVPATTRVEELESAIRAVCEPYFDRALKDISLGQVLMRLFSTSRRFNVEIQPQLVLLQKTMLNVEGLGRSLDPELDLWKTAKPYLERWMNEQIGAKGWYERLKIEAPQWSKTLPQLPRLIHHVLAQRHDAQQRGINDETIRQILLEQKRTNRLLQGLLMFGVAVGVGAVLARAWLAIAYGGY.

Residues aspartate 118 to glycine 501 enclose the Protein kinase domain. ATP is bound by residues valine 124–valine 132 and lysine 150. Aspartate 285 acts as the Proton acceptor in catalysis. A helical transmembrane segment spans residues leucine 502–isoleucine 522.

Belongs to the ABC1 family. UbiB subfamily.

The protein resides in the cell inner membrane. It functions in the pathway cofactor biosynthesis; ubiquinone biosynthesis [regulation]. Functionally, is probably a protein kinase regulator of UbiI activity which is involved in aerobic coenzyme Q (ubiquinone) biosynthesis. The polypeptide is Probable protein kinase UbiB (Paraburkholderia phymatum (strain DSM 17167 / CIP 108236 / LMG 21445 / STM815) (Burkholderia phymatum)).